Reading from the N-terminus, the 195-residue chain is Cytochrome c oxidase assembly protein CtaG (195 aa).

Residues 1–7 (MSGGKPR) lie on the Cytoplasmic side of the membrane. The chain crosses the membrane as a helical; Signal-anchor for type II membrane protein span at residues 8–30 (SNTRTVAMLAGVVVLMGALSWAA). The Periplasmic portion of the chain corresponds to 31–195 (VPFYSWFCKV…LDAKTEPTVN (165 aa)).

The protein belongs to the COX11/CtaG family.

The protein resides in the cell inner membrane. Exerts its effect at some terminal stage of cytochrome c oxidase synthesis, probably by being involved in the insertion of the copper B into subunit I. In Paracoccus denitrificans (strain Pd 1222), this protein is Cytochrome c oxidase assembly protein CtaG.